A 702-amino-acid polypeptide reads, in one-letter code: Mesothelin-like protein (702 aa).

The N-terminal stretch at 1–35 (MAAAVTIPGPRIGALQSSGLTLLLSLAAHCSGPQA) is a signal peptide. Over 36 to 638 (KVLSPGGLDA…AQASTSGSLW (603 aa)) the chain is Extracellular. Asparagine 122, asparagine 307, and asparagine 424 each carry an N-linked (GlcNAc...) asparagine glycan. The segment at 588–611 (QLGLDASPTSPTGPAHGTRGPPST) is disordered. A helical transmembrane segment spans residues 639-668 (APLGYLPLAMALPCSLLCLLHWGTCILVSV). Residues 669-702 (DSVASGWLGSQGSGAGKTEVLDSAGRPLGLTGQL) lie on the Cytoplasmic side of the membrane.

It belongs to the mesothelin family.

The protein resides in the membrane. May play a role in cellular adhesion. The polypeptide is Mesothelin-like protein (MSLNL) (Homo sapiens (Human)).